Consider the following 146-residue polypeptide: Protein ADM2 (146 aa).

The signal sequence occupies residues 1 to 25; it reads MAQLLMVTVTFGCISLLYLLPGTLS. A propeptide spanning residues 26–96 is cleaved from the precursor; it reads GSLGKGLRPR…HPGPQRHVGS (71 aa). Positions 29-99 are disordered; the sequence is GKGLRPREPP…PQRHVGSRRP (71 aa). Cysteine 108 and cysteine 113 are joined by a disulfide. Tyrosine 145 carries the post-translational modification Tyrosine amide.

The protein belongs to the adrenomedullin family. As to expression, expression was restricted to the intermediate and anterior lobes of the pituitary.

The protein resides in the secreted. Its function is as follows. Intermedin/ADM2 is a peptide hormone that plays a role as physiological regulator of gastrointestinal and cardiovascular bioactivities mediated by the CALCRL-RAMPs receptor complexes. Activates the cAMP-dependent pathway through interaction with CALCRL-RAMP3 receptor complex. This chain is Protein ADM2, found in Rattus norvegicus (Rat).